Reading from the N-terminus, the 148-residue chain is Ribonuclease H (148 aa).

The 142-residue stretch at 3 to 144 (DKEQVVIYTD…ADQLANRGVA (142 aa)) folds into the RNase H type-1 domain. Residues Asp12, Glu50, Asp72, and Asp136 each coordinate Mg(2+). The interval 125 to 148 (GHTGDPGNERADQLANRGVAELPR) is disordered.

The protein belongs to the RNase H family. As to quaternary structure, monomer. Mg(2+) serves as cofactor.

The protein resides in the cytoplasm. It catalyses the reaction Endonucleolytic cleavage to 5'-phosphomonoester.. In terms of biological role, endonuclease that specifically degrades the RNA of RNA-DNA hybrids. The sequence is that of Ribonuclease H from Pseudomonas aeruginosa (strain LESB58).